Reading from the N-terminus, the 126-residue chain is Large ribosomal subunit protein bL12 (126 aa).

The protein belongs to the bacterial ribosomal protein bL12 family. As to quaternary structure, homodimer. Part of the ribosomal stalk of the 50S ribosomal subunit. Forms a multimeric L10(L12)X complex, where L10 forms an elongated spine to which 2 to 4 L12 dimers bind in a sequential fashion. Binds GTP-bound translation factors.

Forms part of the ribosomal stalk which helps the ribosome interact with GTP-bound translation factors. Is thus essential for accurate translation. This chain is Large ribosomal subunit protein bL12, found in Saccharophagus degradans (strain 2-40 / ATCC 43961 / DSM 17024).